Here is a 142-residue protein sequence, read N- to C-terminus: UPF0336 protein PPA1896 (142 aa).

This sequence belongs to the UPF0336 family.

This is UPF0336 protein PPA1896 from Cutibacterium acnes (strain DSM 16379 / KPA171202) (Propionibacterium acnes).